A 104-amino-acid chain; its full sequence is L-rhamnose mutarotase (104 aa).

Residue Tyr18 coordinates substrate. His22 (proton donor) is an active-site residue. Residues Tyr41 and 76-77 each bind substrate; that span reads WW.

This sequence belongs to the rhamnose mutarotase family. In terms of assembly, homodimer.

The protein resides in the cytoplasm. The catalysed reaction is alpha-L-rhamnose = beta-L-rhamnose. Its pathway is carbohydrate metabolism; L-rhamnose metabolism. Involved in the anomeric conversion of L-rhamnose. The protein is L-rhamnose mutarotase of Rhizobium meliloti (strain 1021) (Ensifer meliloti).